We begin with the raw amino-acid sequence, 235 residues long: tRNA (guanine-N(7)-)-methyltransferase (235 aa).

S-adenosyl-L-methionine is bound by residues Gly60, 83–84, 116–117, and Leu136; these read EI and NA. Asp139 is a catalytic residue. 214–216 contributes to the S-adenosyl-L-methionine binding site; sequence SEE.

This sequence belongs to the class I-like SAM-binding methyltransferase superfamily. TrmB family.

It localises to the nucleus. The enzyme catalyses guanosine(46) in tRNA + S-adenosyl-L-methionine = N(7)-methylguanosine(46) in tRNA + S-adenosyl-L-homocysteine. The protein operates within tRNA modification; N(7)-methylguanine-tRNA biosynthesis. Functionally, catalyzes the formation of N(7)-methylguanine at position 46 (m7G46) in tRNA. The polypeptide is tRNA (guanine-N(7)-)-methyltransferase (Anopheles gambiae (African malaria mosquito)).